Here is a 597-residue protein sequence, read N- to C-terminus: MHRYRSHHCAALRKCDVGTKVRLSGWVHRVRDHGGILFVDLRDHFGITQIVADPASPAFKVIEKVRSEWVIRVDGEVCARSDEVINATLPTGEIEIFVQEVEILSKSEELPLPVFGEPDYPEDIRLKYRFLDLRRETMHKNIMRRTEIIAAMRRAMQNNGFTEFSTPLLTASSPEGARDFLVPSRVHQGKFYALPQAPQQYKQLLMMSGFDRYFQIAPCFRDEDPRADRLPGEFYQLDVEMSFVEQEDVLATMEPIMRSIFEEFANGKTVTQNFPRISYDEAIQKYGSDKPDLRNPIIMEDVSQHFYNSGFKVFAQILADDENAQVWAIPAKTGGSRAFCDRMNVWAQGEGQPGLGYIFWRKEEEKFEGAGPIAKNIGEQRTEALRIQLGLENGDACFFVAGDPKKFASFAGAARTRVGEELDLVDRECFSLAWIVDFPFFEWNEDEKKIDFAHNPFSMPQGGENALECQDPLTLKAFQYDLVCNGYEIASGGIRNHLPEMMLKVFELVGLSKKVVKDRFGALYRAFHYGAPPHGGMAAGIDRIIMLLQGVKNLREVALFPMNQQALDLLMNAPSDVSSTQLRDLGIRMAPTQKNSS.

Residue glutamate 175 coordinates L-aspartate. The aspartate stretch occupies residues 199 to 202; the sequence is QQYK. Residues arginine 221 and histidine 454 each contribute to the L-aspartate site. 221-223 is an ATP binding site; that stretch reads RDE. Position 488 (glutamate 488) interacts with ATP. Arginine 495 lines the L-aspartate pocket. 540-543 contributes to the ATP binding site; the sequence is GIDR.

The protein belongs to the class-II aminoacyl-tRNA synthetase family. Type 1 subfamily. Homodimer.

The protein resides in the cytoplasm. The enzyme catalyses tRNA(Asx) + L-aspartate + ATP = L-aspartyl-tRNA(Asx) + AMP + diphosphate. Functionally, aspartyl-tRNA synthetase with relaxed tRNA specificity since it is able to aspartylate not only its cognate tRNA(Asp) but also tRNA(Asn). Reaction proceeds in two steps: L-aspartate is first activated by ATP to form Asp-AMP and then transferred to the acceptor end of tRNA(Asp/Asn). The polypeptide is Aspartate--tRNA(Asp/Asn) ligase (Bartonella tribocorum (strain CIP 105476 / IBS 506)).